Here is a 126-residue protein sequence, read N- to C-terminus: Fluoride-specific ion channel FluC (126 aa).

3 helical membrane passes run 33-53 (LPLN…VFIV), 64-84 (YSLF…SFAL), and 96-116 (GALA…LIGG). 2 residues coordinate Na(+): Gly74 and Thr77.

This sequence belongs to the fluoride channel Fluc/FEX (TC 1.A.43) family.

It localises to the cell membrane. It carries out the reaction fluoride(in) = fluoride(out). Na(+) is not transported, but it plays an essential structural role and its presence is essential for fluoride channel function. Its function is as follows. Fluoride-specific ion channel. Important for reducing fluoride concentration in the cell, thus reducing its toxicity. The polypeptide is Fluoride-specific ion channel FluC (Nitrosopumilus maritimus (strain SCM1)).